We begin with the raw amino-acid sequence, 430 residues long: Zinc finger CCCH domain-containing protein 48 (430 aa).

2 disordered regions span residues 1 to 27 (MDLD…TTDS) and 56 to 90 (GSGP…GTAN). The C3H1-type 1 zinc-finger motif lies at 26–52 (DSNQKVCFHWRAGRCNRYPCPYLHREL). The C3H1-type 2 zinc-finger motif lies at 102–129 (TKTEKLCKFWVDGNCPYGDKCRYLHCWS). WD repeat units lie at residues 142-183 (GHQK…GVLN), 221-258 (GPVG…SCFD), 265-304 (GHTL…QTLT), 306-342 (HTSV…NLEV), 345-389 (THKE…ERGK), and 391-429 (LAKQ…TPIL).

This Arabidopsis thaliana (Mouse-ear cress) protein is Zinc finger CCCH domain-containing protein 48 (ZFWD1).